Consider the following 358-residue polypeptide: Peroxidase 54 (358 aa).

The first 31 residues, 1-31 (MAVTSSSSTCDGFFIISLIVIVSSLFGTSSA), serve as a signal peptide directing secretion. Gln32 carries the pyrrolidone carboxylic acid modification. 2 N-linked (GlcNAc...) asparagine glycosylation sites follow: Asn34 and Asn44. Disulfide bonds link Cys42/Cys122, Cys75/Cys80, Cys128/Cys330, and Cys207/Cys239. His73 acts as the Proton acceptor in catalysis. Residues Asp74, Val77, Gly79, Asp81, and Ser83 each contribute to the Ca(2+) site. N-linked (GlcNAc...) asparagine glycosylation is found at Asn103, Asn161, and Asn166. Position 170 (Pro170) interacts with substrate. N-linked (GlcNAc...) asparagine glycosylation is present at Asn178. His200 is a binding site for heme b. Thr201 contributes to the Ca(2+) binding site. 3 N-linked (GlcNAc...) asparagine glycosylation sites follow: Asn218, Asn228, and Asn242. Residues Asp252, Thr255, and Asp260 each coordinate Ca(2+). Residue Asn298 is glycosylated (N-linked (GlcNAc...) asparagine).

Belongs to the peroxidase family. Classical plant (class III) peroxidase subfamily. It depends on heme b as a cofactor. The cofactor is Ca(2+).

It is found in the secreted. Its subcellular location is the vacuole. It catalyses the reaction 2 a phenolic donor + H2O2 = 2 a phenolic radical donor + 2 H2O. Functionally, removal of H(2)O(2), oxidation of toxic reductants, biosynthesis and degradation of lignin, suberization, auxin catabolism, response to environmental stresses such as wounding, pathogen attack and oxidative stress. These functions might be dependent on each isozyme/isoform in each plant tissue. The chain is Peroxidase 54 (PER54) from Arabidopsis thaliana (Mouse-ear cress).